Consider the following 200-residue polypeptide: Integrin beta-1-binding protein 1 (200 aa).

The span at 1–10 (MFRKGKKRHS) shows a compositional bias: basic residues. Residues 1 to 56 (MFRKGKKRHSSSSSQSSEISTKSKSVDSSLGGLSRSSTVASLDTDSTKSSGQSNNN) are disordered. Positions 6-7 (KK) match the Nuclear localization signal motif. The span at 11-29 (SSSSQSSEISTKSKSVDSS) shows a compositional bias: low complexity. A compositionally biased stretch (polar residues) spans 34 to 56 (SRSSTVASLDTDSTKSSGQSNNN). The residue at position 38 (Thr38) is a Phosphothreonine; by CaMK2. Ser41 is modified (phosphoserine). Residues 58-200 (DTCAEFRIKY…FDSVLTSEKP (143 aa)) enclose the PID domain. Residues 136 to 139 (YLII) are interaction with KRIT1. The interval 139-141 (IRM) is interaction with ITGB1.

As to quaternary structure, interacts (via N-terminus and PTB domain) with ROCK1. Found in a complex, at least composed of ITGB1BP1, KRIT1 and RAP1A. Interacts (via C-terminal region) with ITGB1 (via C-terminal cytoplasmic tail); the interaction prevents talin TLN1 binding to ITGB1 and KRIT1 and ITGB1 compete for the same binding site. Interacts with KRIT1 (via N-terminal NPXY motif); the interaction induces the opening conformation of KRIT1 and KRIT1 and ITGB1 compete for the same binding site. Isoform 2 does not interact with ITGB1. Interacts with CDC42 (GTP- or GDP-bound form); the interaction is increased with the CDC42-membrane bound forms and prevents both CDC42 activation and cell spreading. Interacts (via C-terminal domain region) with NME2. Interacts with FERMT2 and RAC1. In terms of processing, phosphorylation at Thr-38 seems to enhance integrin alpha5beta1-mediated cell adhesion. The degree of phosphorylation is regulated by integrin-dependent cell-matrix interaction.

Its subcellular location is the nucleus. The protein localises to the cytoplasm. The protein resides in the cytoskeleton. It is found in the cell membrane. It localises to the cell projection. Its subcellular location is the lamellipodium. The protein localises to the ruffle. Functionally, key regulator of the integrin-mediated cell-matrix interaction signaling by binding to the ITGB1 cytoplasmic tail and preventing the activation of integrin alpha-5/beta-1 (heterodimer of ITGA5 and ITGB1) by talin or FERMT1. Plays a role in cell proliferation, differentiation, spreading, adhesion and migration in the context of mineralization and bone development and angiogenesis. Stimulates cellular proliferation in a fibronectin-dependent manner. Involved in the regulation of beta-1 integrin-containing focal adhesion (FA) site dynamics by controlling its assembly rate during cell adhesion; inhibits beta-1 integrin clustering within FA by directly competing with talin TLN1, and hence stimulates osteoblast spreading and migration in a fibronectin- and/or collagen-dependent manner. Acts as a guanine nucleotide dissociation inhibitor (GDI) by regulating Rho family GTPases during integrin-mediated cell matrix adhesion; reduces the level of active GTP-bound form of both CDC42 and RAC1 GTPases upon cell adhesion to fibronectin. Stimulates the release of active CDC42 from the membranes to maintain it in an inactive cytoplasmic pool. Participates in the translocation of the Rho-associated protein kinase ROCK1 to membrane ruffles at cell leading edges of the cell membrane, leading to an increase of myoblast cell migration on laminin. Plays a role in bone mineralization at a late stage of osteoblast differentiation; modulates the dynamic formation of focal adhesions into fibrillar adhesions, which are adhesive structures responsible for fibronectin deposition and fibrillogenesis. Plays a role in blood vessel development; acts as a negative regulator of angiogenesis by attenuating endothelial cell proliferation and migration, lumen formation and sprouting angiogenesis by promoting AKT phosphorylation and inhibiting ERK1/2 phosphorylation through activation of the Notch signaling pathway. Promotes transcriptional activity of the MYC promoter. The chain is Integrin beta-1-binding protein 1 (ITGB1BP1) from Bos taurus (Bovine).